Here is a 145-residue protein sequence, read N- to C-terminus: Phospholipase A2 phospholipin (145 aa).

A signal peptide spans 1–15 (MVDLARRCSGSTEGR). The Ca(2+) site is built by W24, G26, and G28. Cystine bridges form between C25/C46, C45/C84, C52/C77, C75/C116, and C121/C132. H49 is a catalytic residue. D50 contacts Ca(2+). The propeptide occupies 124–128 (KRSGR).

The protein belongs to the phospholipase A2 family. Group III subfamily. As to quaternary structure, heterodimer composed of a small subunit and a large subunit; disulfid-linked. The cofactor is Ca(2+). In terms of tissue distribution, expressed by the venom gland.

Its subcellular location is the secreted. It catalyses the reaction a 1,2-diacyl-sn-glycero-3-phosphocholine + H2O = a 1-acyl-sn-glycero-3-phosphocholine + a fatty acid + H(+). Its function is as follows. Scorpion venom phospholipase A2 (PLA2) that contains enzymatic activity, but does not inhibit ryanodine receptors in contrary to imperatoxin-1, another heterodimer of P.imperator venom. PLA2 catalyzes the calcium-dependent hydrolysis of the 2-acyl groups in 3-sn-phosphoglycerides. The chain is Phospholipase A2 phospholipin from Pandinus imperator (Emperor scorpion).